The following is a 321-amino-acid chain: Ribose-phosphate pyrophosphokinase (321 aa).

Residues 44 to 46 (DGE) and 103 to 104 (RQ) contribute to the ATP site. H137 and D179 together coordinate Mg(2+). The active site involves K202. Residues R204, D228, and 232–236 (DTAGT) each bind D-ribose 5-phosphate.

Belongs to the ribose-phosphate pyrophosphokinase family. Class I subfamily. In terms of assembly, homohexamer. Requires Mg(2+) as cofactor.

Its subcellular location is the cytoplasm. It catalyses the reaction D-ribose 5-phosphate + ATP = 5-phospho-alpha-D-ribose 1-diphosphate + AMP + H(+). Its pathway is metabolic intermediate biosynthesis; 5-phospho-alpha-D-ribose 1-diphosphate biosynthesis; 5-phospho-alpha-D-ribose 1-diphosphate from D-ribose 5-phosphate (route I): step 1/1. Its function is as follows. Involved in the biosynthesis of the central metabolite phospho-alpha-D-ribosyl-1-pyrophosphate (PRPP) via the transfer of pyrophosphoryl group from ATP to 1-hydroxyl of ribose-5-phosphate (Rib-5-P). In Staphylococcus aureus (strain Mu50 / ATCC 700699), this protein is Ribose-phosphate pyrophosphokinase.